Consider the following 200-residue polypeptide: Pyridoxal 5'-phosphate synthase subunit PdxT (200 aa).

Residue 46–48 (GES) coordinates L-glutamine. Cys78 (nucleophile) is an active-site residue. L-glutamine-binding positions include Arg107 and 138-139 (IR). Residues His175 and Glu177 each act as charge relay system in the active site.

This sequence belongs to the glutaminase PdxT/SNO family. In terms of assembly, in the presence of PdxS, forms a dodecamer of heterodimers. Only shows activity in the heterodimer.

The enzyme catalyses aldehydo-D-ribose 5-phosphate + D-glyceraldehyde 3-phosphate + L-glutamine = pyridoxal 5'-phosphate + L-glutamate + phosphate + 3 H2O + H(+). It carries out the reaction L-glutamine + H2O = L-glutamate + NH4(+). The protein operates within cofactor biosynthesis; pyridoxal 5'-phosphate biosynthesis. Catalyzes the hydrolysis of glutamine to glutamate and ammonia as part of the biosynthesis of pyridoxal 5'-phosphate. The resulting ammonia molecule is channeled to the active site of PdxS. The chain is Pyridoxal 5'-phosphate synthase subunit PdxT from Corynebacterium glutamicum (strain R).